We begin with the raw amino-acid sequence, 467 residues long: Polygalacturonase (467 aa).

Positions 1–27 (MALQRRFFQFVIITLLIPSFILGYTSA) are cleaved as a signal peptide. Asp-283 (proton donor) is an active-site residue. Asn-290 carries an N-linked (GlcNAc...) asparagine glycan. Residue His-306 is part of the active site.

This sequence belongs to the glycosyl hydrolase 28 family.

The protein resides in the secreted. Its subcellular location is the cell wall. It catalyses the reaction (1,4-alpha-D-galacturonosyl)n+m + H2O = (1,4-alpha-D-galacturonosyl)n + (1,4-alpha-D-galacturonosyl)m.. Acts in concert with the pectinesterase, in the ripening process. Is involved in cell wall metabolism, specifically in polyuronide degradation. In Actinidia deliciosa (Kiwi), this protein is Polygalacturonase.